A 305-amino-acid chain; its full sequence is Aspartate carbamoyltransferase catalytic subunit (305 aa).

R51 and T52 together coordinate carbamoyl phosphate. An L-aspartate-binding site is contributed by K79. Carbamoyl phosphate contacts are provided by R101, H130, and Q133. R163 and R215 together coordinate L-aspartate. Residues G256 and P257 each contribute to the carbamoyl phosphate site.

This sequence belongs to the aspartate/ornithine carbamoyltransferase superfamily. ATCase family. As to quaternary structure, heterododecamer (2C3:3R2) of six catalytic PyrB chains organized as two trimers (C3), and six regulatory PyrI chains organized as three dimers (R2).

The enzyme catalyses carbamoyl phosphate + L-aspartate = N-carbamoyl-L-aspartate + phosphate + H(+). Its pathway is pyrimidine metabolism; UMP biosynthesis via de novo pathway; (S)-dihydroorotate from bicarbonate: step 2/3. Its function is as follows. Catalyzes the condensation of carbamoyl phosphate and aspartate to form carbamoyl aspartate and inorganic phosphate, the committed step in the de novo pyrimidine nucleotide biosynthesis pathway. The chain is Aspartate carbamoyltransferase catalytic subunit from Ehrlichia canis (strain Jake).